We begin with the raw amino-acid sequence, 239 residues long: Ribonuclease PH (239 aa).

Phosphate-binding positions include R86 and 124–126 (GTR).

This sequence belongs to the RNase PH family. In terms of assembly, homohexameric ring arranged as a trimer of dimers.

The enzyme catalyses tRNA(n+1) + phosphate = tRNA(n) + a ribonucleoside 5'-diphosphate. Its function is as follows. Phosphorolytic 3'-5' exoribonuclease that plays an important role in tRNA 3'-end maturation. Removes nucleotide residues following the 3'-CCA terminus of tRNAs; can also add nucleotides to the ends of RNA molecules by using nucleoside diphosphates as substrates, but this may not be physiologically important. Probably plays a role in initiation of 16S rRNA degradation (leading to ribosome degradation) during starvation. This is Ribonuclease PH from Cupriavidus taiwanensis (strain DSM 17343 / BCRC 17206 / CCUG 44338 / CIP 107171 / LMG 19424 / R1) (Ralstonia taiwanensis (strain LMG 19424)).